The chain runs to 361 residues: tRNA-specific 2-thiouridylase MnmA (361 aa).

ATP contacts are provided by residues 9–16 (GMSGGVDS) and methionine 35. The segment at 95–97 (NPD) is interaction with target base in tRNA. The Nucleophile role is filled by cysteine 100. Cysteine 100 and cysteine 196 are joined by a disulfide. Glycine 124 lines the ATP pocket. The interaction with tRNA stretch occupies residues 146 to 148 (KDQ). Cysteine 196 (cysteine persulfide intermediate) is an active-site residue. The tract at residues 308-309 (RY) is interaction with tRNA.

This sequence belongs to the MnmA/TRMU family.

Its subcellular location is the cytoplasm. It carries out the reaction S-sulfanyl-L-cysteinyl-[protein] + uridine(34) in tRNA + AH2 + ATP = 2-thiouridine(34) in tRNA + L-cysteinyl-[protein] + A + AMP + diphosphate + H(+). Catalyzes the 2-thiolation of uridine at the wobble position (U34) of tRNA, leading to the formation of s(2)U34. The chain is tRNA-specific 2-thiouridylase MnmA from Nitrosomonas eutropha (strain DSM 101675 / C91 / Nm57).